A 192-amino-acid polypeptide reads, in one-letter code: Large ribosomal subunit protein bL9 (192 aa).

Residues 173 to 192 (ALRPEDFFDPEADGVDEDEA) form a disordered region. Residues 179 to 192 (FFDPEADGVDEDEA) show a composition bias toward acidic residues.

It belongs to the bacterial ribosomal protein bL9 family.

Functionally, binds to the 23S rRNA. The polypeptide is Large ribosomal subunit protein bL9 (rplI) (Rhizobium leguminosarum bv. trifolii).